The primary structure comprises 419 residues: Homeobox-containing protein 1 (419 aa).

Positions 18–49 (DEPRFTIEQIDLLQRLRRTGMTKHEILHALET) constitute an HNF-p1 domain. Residues 56-152 (EHSDKFGRRS…GQRSYSFEAS (97 aa)) form a disordered region. K60 is covalently cross-linked (Glycyl lysine isopeptide (Lys-Gly) (interchain with G-Cter in SUMO2)). Low complexity-rich tracts occupy residues 64-73 (RSSYGGSSYG) and 81-93 (ASSS…TQTQ). Residues 94–132 (HSGMSPSPSNSYDTSPLPCTTNQNGRENNDRLSTSNGKM) are compositionally biased toward polar residues. K131 participates in a covalent cross-link: Glycyl lysine isopeptide (Lys-Gly) (interchain with G-Cter in SUMO2). Residues 145–241 (RSYSFEASEE…PGATLSMRPA (97 aa)) form the POU-specific atypical domain. S148 is subject to Phosphoserine. A Glycyl lysine isopeptide (Lys-Gly) (interchain with G-Cter in SUMO2) cross-link involves residue K161. At S170 the chain carries Phosphoserine. Glycyl lysine isopeptide (Lys-Gly) (interchain with G-Cter in SUMO2) cross-links involve residues K174, K217, and K310. The homeobox DNA-binding region spans 267 to 341 (RRGSRFTWRK…NRRKEIKRRA (75 aa)). The segment at 352–384 (IDVQSPGGHSNSDDVDGNDYSEQDDSTSHSDHQ) is disordered. Over residues 364 to 376 (DDVDGNDYSEQDD) the composition is skewed to acidic residues. Residue K412 forms a Glycyl lysine isopeptide (Lys-Gly) (interchain with G-Cter in SUMO1); alternate linkage. K412 participates in a covalent cross-link: Glycyl lysine isopeptide (Lys-Gly) (interchain with G-Cter in SUMO2); alternate.

Associates with the telomerase holoenzyme complex. Interacts with DKC1, XRCC6 and COIL.

The protein resides in the nucleus. It is found in the cytoplasm. The protein localises to the chromosome. Its subcellular location is the telomere. It localises to the cajal body. The protein resides in the PML body. In terms of biological role, binds directly to 5'-TTAGGG-3' repeats in telomeric DNA. Associates with the telomerase complex at sites of active telomere processing and positively regulates telomere elongation. Important for TERT binding to chromatin, indicating a role in recruitment of the telomerase complex to telomeres. Also plays a role in the alternative lengthening of telomeres (ALT) pathway in telomerase-negative cells where it promotes formation and/or maintenance of ALT-associated promyelocytic leukemia bodies (APBs). Enhances formation of telomere C-circles in ALT cells, suggesting a possible role in telomere recombination. Might also be involved in the DNA damage response at telomeres. In Mus musculus (Mouse), this protein is Homeobox-containing protein 1 (Hmbox1).